We begin with the raw amino-acid sequence, 177 residues long: Large ribosomal subunit protein uL6 (177 aa).

This sequence belongs to the universal ribosomal protein uL6 family. As to quaternary structure, part of the 50S ribosomal subunit.

Functionally, this protein binds to the 23S rRNA, and is important in its secondary structure. It is located near the subunit interface in the base of the L7/L12 stalk, and near the tRNA binding site of the peptidyltransferase center. The chain is Large ribosomal subunit protein uL6 from Psychrobacter arcticus (strain DSM 17307 / VKM B-2377 / 273-4).